An 87-amino-acid polypeptide reads, in one-letter code: U14-lycotoxin-Ls1c (87 aa).

The first 20 residues, 1-20 (MNSKVFAVLLLLALLTCILS), serve as a signal peptide directing secretion. Residues 21 to 66 (EKYCPTPRNTSCKKMNIKNNCCRDSDCTSNAFCCAEPCGNFCHKAS) form the WAP domain. 5 disulfide bridges follow: cysteine 24–cysteine 54, cysteine 32–cysteine 58, cysteine 41–cysteine 53, cysteine 42–cysteine 80, and cysteine 47–cysteine 62.

This sequence belongs to the venom protein 11 family. 01 (wap-1) subfamily. Contains 5 disulfide bonds. As to expression, expressed by the venom gland.

The protein resides in the secreted. Its function is as follows. Has antibacterial activity. This Lycosa singoriensis (Wolf spider) protein is U14-lycotoxin-Ls1c.